Reading from the N-terminus, the 301-residue chain is Coiled-coil domain-containing protein 69-B (301 aa).

The segment at 1–43 (MGSKTSKMCCPQLRKKKRQKAHKEGPSSQELNDLNAKSQGPNE) is disordered. A lipid anchor (N-myristoyl glycine) is attached at G2. Over residues 26–41 (PSSQELNDLNAKSQGP) the composition is skewed to polar residues. 2 coiled-coil regions span residues 42-167 (NELL…SILS) and 213-281 (KSTM…NLYR).

This sequence belongs to the CCDC69 family.

The protein localises to the cytoplasm. It is found in the cytoskeleton. It localises to the spindle. Its subcellular location is the midbody. Functionally, may act as a scaffold to regulate the recruitment and assembly of spindle midzone components. The sequence is that of Coiled-coil domain-containing protein 69-B (ccdc69-b) from Xenopus laevis (African clawed frog).